A 181-amino-acid chain; its full sequence is Large ribosomal subunit protein uL5 (181 aa).

It belongs to the universal ribosomal protein uL5 family. Part of the 50S ribosomal subunit; part of the 5S rRNA/L5/L18/L25 subcomplex. Contacts the 5S rRNA and the P site tRNA. Forms a bridge to the 30S subunit in the 70S ribosome.

Functionally, this is one of the proteins that bind and probably mediate the attachment of the 5S RNA into the large ribosomal subunit, where it forms part of the central protuberance. In the 70S ribosome it contacts protein S13 of the 30S subunit (bridge B1b), connecting the 2 subunits; this bridge is implicated in subunit movement. Contacts the P site tRNA; the 5S rRNA and some of its associated proteins might help stabilize positioning of ribosome-bound tRNAs. The sequence is that of Large ribosomal subunit protein uL5 from Onion yellows phytoplasma (strain OY-M).